The chain runs to 230 residues: CRP-like protein Clp (230 aa).

P18 to V139 lines the a nucleoside 3',5'-cyclic phosphate pocket. The region spanning L158–R230 is the HTH crp-type domain. Residues R190–K209 constitute a DNA-binding region (H-T-H motif).

Homodimer.

It is found in the cytoplasm. Its activity is regulated as follows. Allosterically inhibited by cyclic di-GMP (c-di-GMP), which binds to Clp and abolishes its ability to bind its target gene promoter. Its function is as follows. Global transcriptional regulator that regulates virulence factors production by activating or repressing the expression of a large set of genes in diffusible signal factor (DSF) pathway. The protein is CRP-like protein Clp (clp) of Xanthomonas campestris pv. campestris (strain 8004).